Reading from the N-terminus, the 177-residue chain is Flavodoxin (177 aa).

Positions 4-173 constitute a Flavodoxin-like domain; that stretch reads IGIFFGSDTG…RIDTWLDKLK (170 aa).

The protein belongs to the flavodoxin family. The cofactor is FMN.

Its function is as follows. Low-potential electron donor to a number of redox enzymes. NifF is the electron donor to nitrogenase. The protein is Flavodoxin (nifF) of Enterobacter agglomerans (Erwinia herbicola).